Here is a 420-residue protein sequence, read N- to C-terminus: ATP phosphoribosyltransferase regulatory subunit (420 aa).

Belongs to the class-II aminoacyl-tRNA synthetase family. HisZ subfamily. In terms of assembly, heteromultimer composed of HisG and HisZ subunits.

The protein resides in the cytoplasm. Its pathway is amino-acid biosynthesis; L-histidine biosynthesis; L-histidine from 5-phospho-alpha-D-ribose 1-diphosphate: step 1/9. Its function is as follows. Required for the first step of histidine biosynthesis. May allow the feedback regulation of ATP phosphoribosyltransferase activity by histidine. The chain is ATP phosphoribosyltransferase regulatory subunit from Bacillus cereus (strain ATCC 10987 / NRS 248).